We begin with the raw amino-acid sequence, 89 residues long: cAMP-regulated phosphoprotein 21 (89 aa).

Positions 1–89 (MSEQGDLNQA…GGESLQDQTL (89 aa)) are disordered. An N-acetylserine modification is found at Ser2. Low complexity predominate over residues 9 to 25 (QAIAEEGGTEQETATPE). Ser33 carries the phosphoserine modification. The span at 40–53 (LELQRRLEAQNQER) shows a compositional bias: basic and acidic residues. Ser56 carries the phosphoserine modification.

In terms of assembly, interacts with CALM1. Phosphorylation at Ser-56 favors interaction with CALM1.

It localises to the cytoplasm. Its function is as follows. May act as a competitive inhibitor of calmodulin-dependent enzymes such as calcineurin in neurons. The polypeptide is cAMP-regulated phosphoprotein 21 (ARPP21) (Pongo abelii (Sumatran orangutan)).